A 216-amino-acid polypeptide reads, in one-letter code: ATP phosphoribosyltransferase (216 aa).

It belongs to the ATP phosphoribosyltransferase family. Short subfamily. Heteromultimer composed of HisG and HisZ subunits.

Its subcellular location is the cytoplasm. The catalysed reaction is 1-(5-phospho-beta-D-ribosyl)-ATP + diphosphate = 5-phospho-alpha-D-ribose 1-diphosphate + ATP. It functions in the pathway amino-acid biosynthesis; L-histidine biosynthesis; L-histidine from 5-phospho-alpha-D-ribose 1-diphosphate: step 1/9. Its function is as follows. Catalyzes the condensation of ATP and 5-phosphoribose 1-diphosphate to form N'-(5'-phosphoribosyl)-ATP (PR-ATP). Has a crucial role in the pathway because the rate of histidine biosynthesis seems to be controlled primarily by regulation of HisG enzymatic activity. This chain is ATP phosphoribosyltransferase, found in Synechococcus sp. (strain CC9902).